The chain runs to 320 residues: Aminoacyl tRNA synthase complex-interacting multifunctional protein 2 (320 aa).

The tract at residues threonine 82 to proline 162 is interaction with PRKN. An interaction with TP53 region spans residues proline 162–histidine 225. Residues leucine 220–lysine 317 enclose the GST C-terminal domain.

In terms of assembly, part of the multisynthetase complex (MSC), a multisubunit complex that groups tRNA ligases for Arg (RARS1), Asp (DARS1), Gln (QARS1), Ile (IARS1), Leu (LARS1), Lys (KARS1), Met (MARS1) the bifunctional ligase for Glu and Pro (EPRS1) and the auxiliary subunits AIMP1/p43, AIMP2/p38 and EEF1E1/p18. Interacts (via N-terminus) with KARS1. Interacts with EPRS1. Forms a linear complex that contains MARS1, EEF1E1, EPRS1 and AIMP2 that is at the core of the multisubunit complex. Binds FUBP1 (via C-terminus). Interacts in both its unphosphorylated and phosphorylated forms with p53/TP53 (via N-terminus) in the nucleus following UV irradiation. Interacts (via N-terminus) with PRKN/parkin (via first RING-type domain). Interacts with TARS3. In terms of processing, phosphorylated on serine residues in response to UV irradiation. Ubiquitinated by PRKN, leading to its degradation by the proteasome. Mutant PRKN fails to ubiquitinate AIMP2 efficiently, allowing its accumulation which may contribute to neurodegeneration associated with Parkinson disease.

It localises to the cytoplasm. Its subcellular location is the cytosol. The protein resides in the nucleus. Functionally, required for assembly and stability of the aminoacyl-tRNA synthase complex. Mediates ubiquitination and degradation of FUBP1, a transcriptional activator of MYC, leading to MYC down-regulation which is required for aveolar type II cell differentiation. Blocks MDM2-mediated ubiquitination and degradation of p53/TP53. Functions as a proapoptotic factor. The chain is Aminoacyl tRNA synthase complex-interacting multifunctional protein 2 (AIMP2) from Homo sapiens (Human).